A 284-amino-acid polypeptide reads, in one-letter code: MDAIKKKMQAMKIEKDNAMDRADAAEEKARQQQERVEKLEEELRDTQKKMMQVENELDKAQEELTGANAQLEEKEKKVQEAEAEVAALNRRIQLLEEDFERAEERLIIATEKLGEASQTADESERVRKVMENRSLQDEERVYQLEAQLKEAQLLAEEADRKYDEVARKLAMVEADLERAEERAEAGENKIVELEEELRVVGNNLKSLEVSEEKALQREDSYEEQIRLLTQRLKEAETRAEFAERSVQKLQKEVDRLEDELVHEKEKYKAISEELDQTFQELSGY.

The disordered stretch occupies residues 1-47 (MDAIKKKMQAMKIEKDNAMDRADAAEEKARQQQERVEKLEEELRDTQ). Residues 1–284 (MDAIKKKMQA…DQTFQELSGY (284 aa)) adopt a coiled-coil conformation. Basic and acidic residues predominate over residues 12 to 38 (KIEKDNAMDRADAAEEKARQQQERVEK).

Belongs to the tropomyosin family.

In terms of biological role, tropomyosin, in association with the troponin complex, plays a central role in the calcium dependent regulation of muscle contraction. In Trichinella spiralis (Trichina worm), this protein is Tropomyosin.